The sequence spans 78 residues: Sec-independent protein translocase protein TatA (78 aa).

The helical transmembrane segment at 1–21 (MGSLSIWHWIVVIGVVLLLFG) threads the bilayer. Residues 42-60 (GLQDDEKTAEKPEPVKSID) show a composition bias toward basic and acidic residues. Residues 42-78 (GLQDDEKTAEKPEPVKSIDHTAPPAAAPRTDVGSKVV) form a disordered region.

Belongs to the TatA/E family. In terms of assembly, the Tat system comprises two distinct complexes: a TatABC complex, containing multiple copies of TatA, TatB and TatC subunits, and a separate TatA complex, containing only TatA subunits. Substrates initially bind to the TatABC complex, which probably triggers association of the separate TatA complex to form the active translocon.

Its subcellular location is the cell inner membrane. In terms of biological role, part of the twin-arginine translocation (Tat) system that transports large folded proteins containing a characteristic twin-arginine motif in their signal peptide across membranes. TatA could form the protein-conducting channel of the Tat system. The polypeptide is Sec-independent protein translocase protein TatA (Rhodopseudomonas palustris (strain BisB18)).